The chain runs to 140 residues: Small ribosomal subunit protein uS12 (140 aa).

Asp103 is subject to 3-methylthioaspartic acid. The segment at 120-140 (GVQKRMQARSKYGAKRPKKGK) is disordered. The span at 125 to 140 (MQARSKYGAKRPKKGK) shows a compositional bias: basic residues.

The protein belongs to the universal ribosomal protein uS12 family. Part of the 30S ribosomal subunit. Contacts proteins S8 and S17. May interact with IF1 in the 30S initiation complex.

With S4 and S5 plays an important role in translational accuracy. Its function is as follows. Interacts with and stabilizes bases of the 16S rRNA that are involved in tRNA selection in the A site and with the mRNA backbone. Located at the interface of the 30S and 50S subunits, it traverses the body of the 30S subunit contacting proteins on the other side and probably holding the rRNA structure together. The combined cluster of proteins S8, S12 and S17 appears to hold together the shoulder and platform of the 30S subunit. The sequence is that of Small ribosomal subunit protein uS12 from Desulfitobacterium hafniense (strain Y51).